Here is a 594-residue protein sequence, read N- to C-terminus: Probable ABC transporter-binding protein DR_1571 (594 aa).

The signal sequence occupies residues 1-18; the sequence is MKKVMMLALALGASTSLA.

It belongs to the bacterial solute-binding protein 5 family.

Its function is as follows. Probably part of a binding-protein-dependent transport system. This is Probable ABC transporter-binding protein DR_1571 from Deinococcus radiodurans (strain ATCC 13939 / DSM 20539 / JCM 16871 / CCUG 27074 / LMG 4051 / NBRC 15346 / NCIMB 9279 / VKM B-1422 / R1).